Here is a 45-residue protein sequence, read N- to C-terminus: Large ribosomal subunit protein bL34 (45 aa).

It belongs to the bacterial ribosomal protein bL34 family.

The sequence is that of Large ribosomal subunit protein bL34 from Paenarthrobacter aurescens (strain TC1).